The sequence spans 285 residues: Putative phosphatase MG125 (285 aa).

The Nucleophile role is filled by aspartate 8. Residue aspartate 8 coordinates Mg(2+). Leucine 9 provides a ligand contact to phosphate. A Mg(2+)-binding site is contributed by aspartate 10. Residues 44-45 (TG) and lysine 205 contribute to the phosphate site. Mg(2+) contacts are provided by aspartate 228 and serine 229. A phosphate-binding site is contributed by asparagine 231.

This sequence belongs to the HAD-like hydrolase superfamily. Cof family. Mg(2+) serves as cofactor.

The sequence is that of Putative phosphatase MG125 from Mycoplasma genitalium (strain ATCC 33530 / DSM 19775 / NCTC 10195 / G37) (Mycoplasmoides genitalium).